Reading from the N-terminus, the 172-residue chain is MFDAFTKVVAQADARGQFISTSEIDALAAMVSDSNKRLDAVNRISSNASTIVASAARQLFAQQPALIAPGGNAYTSRRMAACLRDMEIILRYVTYSAFTGDASVMEDRCLNGLRETYLALGTPGASVAAGVNLMKDAALAIINDKAGISAGDCASLSSEIGTYFDRAAASVA.

N72 carries the N4-methylasparagine modification. C82 lines the (2R,3E)-phycocyanobilin pocket. A (2R,3E)-phycoerythrobilin-binding site is contributed by C153.

Belongs to the phycobiliprotein family. As to quaternary structure, heterodimer of an alpha and a beta chain. Contains two covalently linked bilin chromophores.

The protein resides in the cellular thylakoid membrane. Light-harvesting photosynthetic bile pigment-protein from the phycobiliprotein complex. The polypeptide is R-phycocyanin-2 beta chain (rpcB) (Synechococcus sp. (strain WH8103)).